We begin with the raw amino-acid sequence, 232 residues long: 2-C-methyl-D-erythritol 4-phosphate cytidylyltransferase (232 aa).

The protein belongs to the IspD/TarI cytidylyltransferase family. IspD subfamily.

The catalysed reaction is 2-C-methyl-D-erythritol 4-phosphate + CTP + H(+) = 4-CDP-2-C-methyl-D-erythritol + diphosphate. Its pathway is isoprenoid biosynthesis; isopentenyl diphosphate biosynthesis via DXP pathway; isopentenyl diphosphate from 1-deoxy-D-xylulose 5-phosphate: step 2/6. Functionally, catalyzes the formation of 4-diphosphocytidyl-2-C-methyl-D-erythritol from CTP and 2-C-methyl-D-erythritol 4-phosphate (MEP). The chain is 2-C-methyl-D-erythritol 4-phosphate cytidylyltransferase from Bacillus velezensis (strain DSM 23117 / BGSC 10A6 / LMG 26770 / FZB42) (Bacillus amyloliquefaciens subsp. plantarum).